Consider the following 227-residue polypeptide: Glutathione S-transferase U18 (227 aa).

In terms of domain architecture, GST N-terminal spans 4-83 (EDVKLIGSWA…YIDEAWNSSG (80 aa)). Glutathione contacts are provided by residues 14-15 (SV), 40-41 (SK), 54-55 (KM), and 67-68 (ES). Residues 90–221 (HPYDRAIARF…TKLAEFARKL (132 aa)) enclose the GST C-terminal domain.

Belongs to the GST superfamily. Tau family.

Its subcellular location is the cytoplasm. The protein localises to the cytosol. The catalysed reaction is RX + glutathione = an S-substituted glutathione + a halide anion + H(+). In terms of biological role, may be involved in the conjugation of reduced glutathione to a wide number of exogenous and endogenous hydrophobic electrophiles and have a detoxification role against certain herbicides. This is Glutathione S-transferase U18 (GSTU18) from Arabidopsis thaliana (Mouse-ear cress).